The sequence spans 218 residues: Probable 3-keto-L-gulonate-6-phosphate decarboxylase (218 aa).

Asp11 provides a ligand contact to substrate. Positions 33 and 62 each coordinate Mg(2+). Residue Arg194 coordinates substrate.

Belongs to the HPS/KGPDC family. KGPDC subfamily. It depends on Mg(2+) as a cofactor.

It carries out the reaction 3-dehydro-L-gulonate 6-phosphate + H(+) = L-xylulose 5-phosphate + CO2. It functions in the pathway cofactor degradation; L-ascorbate degradation; D-xylulose 5-phosphate from L-ascorbate: step 2/4. In terms of biological role, catalyzes the decarboxylation of 3-keto-L-gulonate-6-P into L-xylulose-5-P. Is involved in the anaerobic L-ascorbate utilization. The protein is Probable 3-keto-L-gulonate-6-phosphate decarboxylase (ulaD) of Mycoplasma pneumoniae (strain ATCC 29342 / M129 / Subtype 1) (Mycoplasmoides pneumoniae).